The chain runs to 498 residues: MLEEGVLPSPGPALPQEENTGEEGMAAGLLTAGPRGSTFFSSVTVAFAQERWRCLVSTPRDRFKEGIPGKSRSLVLLGLPVSQPGMNSQLEQREGAWMLEGEDLRSPSPGWKIISGSPPEQALSEASFQDPCVEMPPGDSDHGTSDLEKSFNLRPVLSPQQRVPVEARPRKCETHTESFKNSEILKPHRAKPYACNECGKAFSYCSSLSQHQKSHTGEKPYECSECGKAFSQSSSLIQHQRIHTGEKPYKCSECGRAFSQNANLTKHQRTHTGEKPYRCSECEKAFSDCSALVQHQRIHTGEKPYECSDCGKAFRHSANLTNHQRTHTGEKPYKCSECGKAFSYCAAFIQHQRIHTGEKPYRCAACGKAFSQSANLTNHQRTHTGEKPYKCSECGKAFSQSTNLIIHQKTHTGEKPYKCNECGKFFSESSALIRHHIIHTGEKPYECNECGKAFNQSSSLSQHQRIHTGVKPYECSECGKAFRCSSAFVRHQRLHAGE.

The disordered stretch occupies residues 1–23 (MLEEGVLPSPGPALPQEENTGEE). The KRAB domain occupies 38-109 (TFFSSVTVAF…EGEDLRSPSP (72 aa)). C2H2-type zinc fingers lie at residues 193–215 (YACN…QKSH), 221–243 (YECS…QRIH), 249–271 (YKCS…QRTH), 277–299 (YRCS…QRIH), 305–327 (YECS…QRTH), 333–355 (YKCS…QRIH), 361–383 (YRCA…QRTH), 389–411 (YKCS…QKTH), 417–439 (YKCN…HIIH), 445–467 (YECN…QRIH), and 473–495 (YECS…QRLH).

It belongs to the krueppel C2H2-type zinc-finger protein family.

It localises to the nucleus. In terms of biological role, may be involved in transcriptional regulation. The sequence is that of Zinc finger protein 79 (ZNF79) from Homo sapiens (Human).